Here is a 346-residue protein sequence, read N- to C-terminus: 4-hydroxy-2-oxovalerate aldolase 2 (346 aa).

One can recognise a Pyruvate carboxyltransferase domain in the interval 8 to 258; it reads VTLVDTTLRD…HTGVELFPLI (251 aa). Substrate is bound by residues 16–17, serine 170, and histidine 197; that span reads RD. Aspartate 17 is a binding site for Mn(2+). Residues histidine 197 and histidine 199 each contribute to the Mn(2+) site. Position 288 (tyrosine 288) interacts with substrate.

It belongs to the 4-hydroxy-2-oxovalerate aldolase family.

The enzyme catalyses (S)-4-hydroxy-2-oxopentanoate = acetaldehyde + pyruvate. This chain is 4-hydroxy-2-oxovalerate aldolase 2, found in Nocardia farcinica (strain IFM 10152).